We begin with the raw amino-acid sequence, 596 residues long: Phosphomethylpyrimidine synthase 1 (596 aa).

Substrate contacts are provided by residues Asn-228, Met-257, Tyr-286, His-322, 342–344, 383–386, and Glu-422; these read SRG and DGLR. His-426 is a binding site for Zn(2+). Tyr-449 is a substrate binding site. His-490 contributes to the Zn(2+) binding site. [4Fe-4S] cluster is bound by residues Cys-570, Cys-573, and Cys-578.

Belongs to the ThiC family. Homodimer. The cofactor is [4Fe-4S] cluster.

It catalyses the reaction 5-amino-1-(5-phospho-beta-D-ribosyl)imidazole + S-adenosyl-L-methionine = 4-amino-2-methyl-5-(phosphooxymethyl)pyrimidine + CO + 5'-deoxyadenosine + formate + L-methionine + 3 H(+). The protein operates within cofactor biosynthesis; thiamine diphosphate biosynthesis. Catalyzes the synthesis of the hydroxymethylpyrimidine phosphate (HMP-P) moiety of thiamine from aminoimidazole ribotide (AIR) in a radical S-adenosyl-L-methionine (SAM)-dependent reaction. In Syntrophotalea carbinolica (strain DSM 2380 / NBRC 103641 / GraBd1) (Pelobacter carbinolicus), this protein is Phosphomethylpyrimidine synthase 1.